The following is a 104-amino-acid chain: Integration host factor subunit beta (104 aa).

Belongs to the bacterial histone-like protein family. In terms of assembly, heterodimer of an alpha and a beta chain.

This protein is one of the two subunits of integration host factor, a specific DNA-binding protein that functions in genetic recombination as well as in transcriptional and translational control. The polypeptide is Integration host factor subunit beta (Xylella fastidiosa (strain M23)).